Here is a 264-residue protein sequence, read N- to C-terminus: MDTRAIGFLDSGVGGLTVVCELIRQLPHEKIVYIGDSARAPYGPRPKKQIKEYTWELVNFLLTQNVKMIVFACNTATAVAWEEVKAALDIPVLGVILPGASAAIKSTTKGQVGVIGTPMTVASDIYRKKIQLLAPSVQVRSLACPKFVPIVESNEMCSSIAKKIVYDSLSPLVGKIDTLVLGCTHYPLLRPIIQNVMGPSVKLIDSGAECVRDISVLLNYFDINGNYHQKAVEHRFFTTANPEIFQEIASIWLKQKINVEHVTL.

Substrate is bound by residues 10 to 11 and 42 to 43; these read DS and YG. Cys-73 serves as the catalytic Proton donor/acceptor. 74 to 75 serves as a coordination point for substrate; the sequence is NT. The active-site Proton donor/acceptor is Cys-183. 184–185 lines the substrate pocket; sequence TH.

Belongs to the aspartate/glutamate racemases family.

It catalyses the reaction L-glutamate = D-glutamate. It functions in the pathway cell wall biogenesis; peptidoglycan biosynthesis. Its function is as follows. Provides the (R)-glutamate required for cell wall biosynthesis. This is Glutamate racemase from Streptococcus pyogenes serotype M2 (strain MGAS10270).